Here is a 410-residue protein sequence, read N- to C-terminus: Cysteine desulfurase IscS (410 aa).

Pyridoxal 5'-phosphate contacts are provided by residues 80–81, asparagine 160, glutamine 188, and 208–210; these read AT and SGH. Position 211 is an N6-(pyridoxal phosphate)lysine (lysine 211). Threonine 248 lines the pyridoxal 5'-phosphate pocket. Cysteine 334 functions as the Cysteine persulfide intermediate in the catalytic mechanism. Cysteine 334 lines the [2Fe-2S] cluster pocket.

The protein belongs to the class-V pyridoxal-phosphate-dependent aminotransferase family. NifS/IscS subfamily. Homodimer. Forms a heterotetramer with IscU, interacts with other sulfur acceptors. It depends on pyridoxal 5'-phosphate as a cofactor.

It is found in the cytoplasm. It carries out the reaction (sulfur carrier)-H + L-cysteine = (sulfur carrier)-SH + L-alanine. The protein operates within cofactor biosynthesis; iron-sulfur cluster biosynthesis. Functionally, master enzyme that delivers sulfur to a number of partners involved in Fe-S cluster assembly, tRNA modification or cofactor biosynthesis. Catalyzes the removal of elemental sulfur atoms from cysteine to produce alanine. Functions as a sulfur delivery protein for Fe-S cluster synthesis onto IscU, an Fe-S scaffold assembly protein, as well as other S acceptor proteins. This Rickettsia akari (strain Hartford) protein is Cysteine desulfurase IscS.